Reading from the N-terminus, the 108-residue chain is Nascent polypeptide-associated complex protein (108 aa).

An NAC-A/B domain is found at 1-68 (MNPREIRRMM…LREVKKEVEQ (68 aa)).

Belongs to the NAC-alpha family. As to quaternary structure, homodimer. Interacts with the ribosome. Binds ribosomal RNA.

Its function is as follows. Contacts the emerging nascent chain on the ribosome. In Picrophilus torridus (strain ATCC 700027 / DSM 9790 / JCM 10055 / NBRC 100828 / KAW 2/3), this protein is Nascent polypeptide-associated complex protein.